A 273-amino-acid chain; its full sequence is MSATELRLAVVGAGGRMGRQLIQAINQQQGVVLGAAFERTNSSLIGADAGELAGIGHIGITVTDNLLAQVGQFDILIDFTRPEGTLSHLAFCVEHHKGMIIGTTGFDEEGKKAINCAAQTIPIVFAANFSVGVNLVLKLLEKAAKVMGSYSDIEIVEAHHRHKVDAPSGTALAMGESIAETLGRDLKDCAVYQRVGHTGERDPRSIGFATIRAGDIVGEHTAIFADIGERVEISHKASSRMTFANGAVKSAIWLSEKKSGLYNMKDVLSLEEL.

NAD(+) contacts are provided by residues 12 to 17 and E38; that span reads GAGGRM. R39 provides a ligand contact to NADP(+). NAD(+)-binding positions include 102-104 and 126-129; these read GTT and AANF. Residue H159 is the Proton donor/acceptor of the active site. Residue H160 participates in (S)-2,3,4,5-tetrahydrodipicolinate binding. K163 serves as the catalytic Proton donor. 169–170 contributes to the (S)-2,3,4,5-tetrahydrodipicolinate binding site; the sequence is GT.

The protein belongs to the DapB family. Homotetramer.

It is found in the cytoplasm. The enzyme catalyses (S)-2,3,4,5-tetrahydrodipicolinate + NAD(+) + H2O = (2S,4S)-4-hydroxy-2,3,4,5-tetrahydrodipicolinate + NADH + H(+). The catalysed reaction is (S)-2,3,4,5-tetrahydrodipicolinate + NADP(+) + H2O = (2S,4S)-4-hydroxy-2,3,4,5-tetrahydrodipicolinate + NADPH + H(+). The protein operates within amino-acid biosynthesis; L-lysine biosynthesis via DAP pathway; (S)-tetrahydrodipicolinate from L-aspartate: step 4/4. In terms of biological role, catalyzes the conversion of 4-hydroxy-tetrahydrodipicolinate (HTPA) to tetrahydrodipicolinate. This chain is 4-hydroxy-tetrahydrodipicolinate reductase, found in Proteus mirabilis (strain HI4320).